Consider the following 384-residue polypeptide: Sphingosine 1-phosphate receptor 4 (384 aa).

At 1-50 the chain is on the extracellular side; sequence MNATGTPVAPESCQQLAAGGHSRLIVLHYNHSGRLAGRGGPEDGGLGALR. 2 N-linked (GlcNAc...) asparagine glycosylation sites follow: Asn2 and Asn30. Residues 51–71 traverse the membrane as a helical segment; the sequence is GLSVAASCLVVLENLLVLAAI. Topologically, residues 72–84 are cytoplasmic; sequence TSHMRSRRWVYYC. The chain crosses the membrane as a helical span at residues 85 to 105; the sequence is LVNITLSDLLTGAAYLANVLL. Topologically, residues 106–117 are extracellular; the sequence is SGARTFRLAPAQ. A helical transmembrane segment spans residues 118-138; sequence WFLREGLLFTALAASTFSLLF. Residues 139-161 lie on the Cytoplasmic side of the membrane; the sequence is TAGERFATMVRPVAESGATKTSR. The chain crosses the membrane as a helical span at residues 162–182; the sequence is VYGFIGLCWLLAALLGMLPLL. Topologically, residues 183–206 are extracellular; it reads GWNCLCAFDRCSSLLPLYSKRYIL. A helical transmembrane segment spans residues 207-227; the sequence is FCLVIFAGVLATIMGLYGAIF. Residues 228-252 lie on the Cytoplasmic side of the membrane; the sequence is RLVQASGQKAPRPAARRKARRLLKT. The chain crosses the membrane as a helical span at residues 253 to 273; it reads VLMILLAFLVCWGPLFGLLLA. The Extracellular portion of the chain corresponds to 274–288; it reads DVFGSNLWAQEYLRG. Residues 289-309 traverse the membrane as a helical segment; the sequence is MDWILALAVLNSAVNPIIYSF. Residues 310-384 are Cytoplasmic-facing; it reads RSREVCRAVL…LSSISSVRSI (75 aa). The S-palmitoyl cysteine moiety is linked to residue Cys323.

This sequence belongs to the G-protein coupled receptor 1 family. In terms of tissue distribution, specifically expressed in fetal and adult lymphoid and hematopoietic tissue as well as in lung. Considerable level of expression in adult and fetal spleen as well as adult peripheral leukocytes and lung. Lower expression in adult thymus, lymph node, bone marrow, and appendix as well as in fetal liver, thymus, and lung.

The protein resides in the cell membrane. Receptor for the lysosphingolipid sphingosine 1-phosphate (S1P). S1P is a bioactive lysophospholipid that elicits diverse physiological effect on most types of cells and tissues. May be involved in cell migration processes that are specific for lymphocytes. This is Sphingosine 1-phosphate receptor 4 (S1PR4) from Homo sapiens (Human).